A 435-amino-acid polypeptide reads, in one-letter code: Homogentisate 1,2-dioxygenase (435 aa).

The active-site Proton acceptor is the H289. Residues H332 and E338 each coordinate Fe cation. Y347 and H368 together coordinate homogentisate. H368 contributes to the Fe cation binding site.

It belongs to the homogentisate dioxygenase family. As to quaternary structure, hexamer; dimer of trimers. Fe cation serves as cofactor.

The enzyme catalyses homogentisate + O2 = 4-maleylacetoacetate + H(+). It participates in amino-acid degradation; L-phenylalanine degradation; acetoacetate and fumarate from L-phenylalanine: step 4/6. Its function is as follows. Involved in the catabolism of homogentisate (2,5-dihydroxyphenylacetate or 2,5-OH-PhAc), a central intermediate in the degradation of phenylalanine and tyrosine. Catalyzes the oxidative ring cleavage of the aromatic ring of homogentisate to yield maleylacetoacetate. This Pseudomonas savastanoi pv. phaseolicola (strain 1448A / Race 6) (Pseudomonas syringae pv. phaseolicola (strain 1448A / Race 6)) protein is Homogentisate 1,2-dioxygenase.